The primary structure comprises 591 residues: Acetyltransferase spyB (591 aa).

N114 carries an N-linked (GlcNAc...) asparagine glycan. Helical transmembrane passes span 123 to 143 (GTIIWTLKYVPLAASRCLIFL), 168 to 188 (TLLYALPFLLAQNLVPAILIL), 199 to 219 (LWIFWSVFVFYQWLQIPISHG), 228 to 248 (VGVQLFIVILQGFNLVLINPL), 309 to 329 (SAFLVRQAAIVAWLYLYLNCA), 383 to 403 (ASILSVGVGLDAPEDWPPLFG), 453 to 473 (IFFVFLVSGVMHVMSDLLMGI), 481 to 501 (ILFFCSMAVGVMIEDAVQAAW), and 529 to 549 (LVGFIWVCVWLSLTTPAWLCP).

The protein belongs to the wax synthase family.

Its subcellular location is the membrane. It catalyses the reaction sartorypyrone F + acetyl-CoA = sartorypyrone G + CoA. The catalysed reaction is sartorypyrone D + acetyl-CoA = sartorypyrone A + CoA. It functions in the pathway secondary metabolite biosynthesis; terpenoid biosynthesis. Its function is as follows. Acetyltransferase; part of the gene cluster that mediates the biosynthesis of meroterpenoids called sartorypyrones. SpyB catalyzes the last step of the pathway and is responsible for the acetylation of sartorypyrones D and F to produce sartorypyrones A and G, respectively. The biosynthesis of sartorypyrones begins with the production of triacetic acid lactone (TAL) by the NR-PKS spyA using one molecule of acetyl-CoA and two molecules of malonyl-CoA. The prenyltransferase spyF then conjugates geranylgeranyl pyrophosphate (GGPP) to TAL to form geranylgeranyl-triacetate lactone, for which the pathway-specific geranylgeranyl pyrophosphate synthase (GGPS) spyE is required to provide GGPP. Subsequently, geranylgeranyl-triacetate lactone is epoxidized at the terminal olein by the FAD-dependent monooxygenase spyC, followed by cyclization of the terpenoid component catalyzed by the terpene cyclase spyD to produce both the bicyclic sartorypyrone F and the monocyclic sartorypyrone D. Finally, the last step of the biosynthesis involves the acetylation of the meroterpenoids sartorypyrones D and F by the acetyltransferase SpyB to produce sartorypyrones A and G, respectively. This chain is Acetyltransferase spyB, found in Aspergillus fumigatus (strain ATCC MYA-4609 / CBS 101355 / FGSC A1100 / Af293) (Neosartorya fumigata).